The sequence spans 270 residues: A-type potassium channel modulatory protein KCNIP2 (270 aa).

Positions 1–17 are enriched in basic and acidic residues; that stretch reads MRGQGRKESLSDSRDLD. The tract at residues 1 to 33 is disordered; that stretch reads MRGQGRKESLSDSRDLDGSYDQLTGHPPGPTKK. The residue at position 9 (S9) is a Phosphoserine. S-palmitoyl cysteine attachment occurs at residues C45 and C46. The 57-residue stretch at 81–137 folds into the EF-hand 1; degenerate domain; it reads FELSTVCHRPEGLEQLQEQTKFTRKELQVLYRGFKNECPSGIVNEENFKQIYSQFFP. 3 EF-hand domains span residues 140–175, 176–211, and 224–259; these read DSST…ILRG, TIDD…IYDM, and APRE…DENI. Residues D153, N155, D157, S159, D164, D189, N191, D193, C195, E200, D237, N239, D241, and E248 each contribute to the Ca(2+) site. The tract at residues 257–270 is interaction with KCND2; sequence ENIMRSMQLFDNVI.

It belongs to the recoverin family. In terms of assembly, component of heteromultimeric potassium channels. Identified in potassium channel complexes containing KCND1, KCND2, KCND3, KCNIP1, KCNIP2, KCNIP3, KCNIP4, DPP6 and DPP10. The KCND2-KCNIP2 channel complex contains four KCND2 and four KCNIP2 subunits. Interacts with KCND2. Probably part of a complex consisting of KCNIP1, KCNIP2 isoform 3 and KCND2. At least isoform 2 and isoform 3 can self-associate to form homodimers and homotetramers. Isoform 3 interacts with KCNIP1 in a calcium-dependent manner. Interacts with KCND3; each KCNIP2 monomer interacts with two adjacent KCND3 subunits, through both the N-terminal inactivation ball of a KCND3 subunit and a C-terminal helix from the adjacent KCND3 subunit, clamping them together; this interaction modulates the channel gating kinetics. Palmitoylated. Palmitoylation enhances association with the plasma membrane. In terms of tissue distribution, expressed in heart ventricle with isoform 1 as most prominent form.

The protein resides in the cell membrane. In terms of biological role, regulatory subunit of Kv4/D (Shal)-type voltage-gated rapidly inactivating A-type potassium channels. Modulates channel density, inactivation kinetics and rate of recovery from inactivation in a calcium-dependent and isoform-specific manner. Involved in KCND2 and KCND3 trafficking to the cell surface. May be required for the expression of I(To) currents in the heart. The chain is A-type potassium channel modulatory protein KCNIP2 from Mustela putorius furo (European domestic ferret).